Here is a 183-residue protein sequence, read N- to C-terminus: Heavy metal-associated isoprenylated plant protein 44 (183 aa).

An HMA domain is found at 50-113 (LQTVELKVRM…AVRRAGKRAE (64 aa)). Residues C61 and C64 each coordinate a metal cation. C180 carries the post-translational modification Cysteine methyl ester. Residue C180 is the site of S-farnesyl cysteine attachment. Residues 181–183 (RLM) constitute a propeptide, removed in mature form.

The protein belongs to the HIPP family.

Heavy-metal-binding protein. This Arabidopsis thaliana (Mouse-ear cress) protein is Heavy metal-associated isoprenylated plant protein 44.